A 294-amino-acid chain; its full sequence is 4-hydroxy-tetrahydrodipicolinate synthase (294 aa).

Thr47 lines the pyruvate pocket. The active-site Proton donor/acceptor is the Tyr136. The active-site Schiff-base intermediate with substrate is the Lys164. Pyruvate is bound at residue Val206.

This sequence belongs to the DapA family. In terms of assembly, homotetramer; dimer of dimers.

The protein resides in the cytoplasm. It carries out the reaction L-aspartate 4-semialdehyde + pyruvate = (2S,4S)-4-hydroxy-2,3,4,5-tetrahydrodipicolinate + H2O + H(+). It functions in the pathway amino-acid biosynthesis; L-lysine biosynthesis via DAP pathway; (S)-tetrahydrodipicolinate from L-aspartate: step 3/4. In terms of biological role, catalyzes the condensation of (S)-aspartate-beta-semialdehyde [(S)-ASA] and pyruvate to 4-hydroxy-tetrahydrodipicolinate (HTPA). This chain is 4-hydroxy-tetrahydrodipicolinate synthase, found in Acaryochloris marina (strain MBIC 11017).